Reading from the N-terminus, the 441-residue chain is Ribosomal protein uS12 methylthiotransferase RimO (441 aa).

The MTTase N-terminal domain occupies 7–117 (PKISFVSLGC…VLEAVHRALP (111 aa)). Residues Cys16, Cys52, Cys81, Cys148, Cys152, and Cys155 each contribute to the [4Fe-4S] cluster site. Residues 134-371 (LTPRHYAYLK…MARQQKISAR (238 aa)) enclose the Radical SAM core domain. The 67-residue stretch at 374 to 440 (KRKVGTRQQV…AYDLHGTVAG (67 aa)) folds into the TRAM domain.

This sequence belongs to the methylthiotransferase family. RimO subfamily. [4Fe-4S] cluster serves as cofactor.

The protein localises to the cytoplasm. The enzyme catalyses L-aspartate(89)-[ribosomal protein uS12]-hydrogen + (sulfur carrier)-SH + AH2 + 2 S-adenosyl-L-methionine = 3-methylsulfanyl-L-aspartate(89)-[ribosomal protein uS12]-hydrogen + (sulfur carrier)-H + 5'-deoxyadenosine + L-methionine + A + S-adenosyl-L-homocysteine + 2 H(+). Its function is as follows. Catalyzes the methylthiolation of an aspartic acid residue of ribosomal protein uS12. This is Ribosomal protein uS12 methylthiotransferase RimO from Rhodopseudomonas palustris (strain BisA53).